The primary structure comprises 497 residues: O-acetyltransferase PaAT-1 (497 aa).

Residue asparagine 35 is glycosylated (N-linked (GlcNAc...) asparagine). The next 9 membrane-spanning stretches (helical) occupy residues 69 to 89 (GISA…GWHI), 107 to 127 (LLIS…YSLS), 157 to 177 (LFVP…LNWY), 241 to 261 (LWTL…LMAF), 278 to 298 (VLFQ…GMLI), 329 to 349 (AIGV…HLAF), 375 to 395 (PIAA…QVLF), 406 to 426 (ISFA…HALG), and 443 to 463 (VAIS…ADFV).

Belongs to the acyltransferase 3 family.

The protein localises to the membrane. It participates in mycotoxin biosynthesis. O-acetyltransferase; part of the 2 gene clusters that mediate the biosynthesis of fusicoccins, diterpene glucosides that display phytohormone-like activity and function as potent activators of plasma membrane H(+)-ATPases in plants by modifying 14-3-3 proteins and cause the plant disease constriction canker. The first step in the pathway is performed by the fusicoccadiene synthase PaFS that possesses both prenyl transferase and terpene cyclase activity, converting isopentenyl diphosphate and dimethylallyl diphosphate into geranylgeranyl diphosphate (GGDP) and successively converting GGDP into fusicocca-2,10(14)-diene, a precursor for fusicoccin H. The second step is the oxidation at the C-8 position by the cytochrome P450 monooxygenase PaP450-2 to yield fusicocca-2,10(14)-diene-8-beta-ol. The cytochrome P450 monooxygenase PaP450-1 then catalyzes the hydroxylation at the C-16 position to produce fusicocca-2,10(14)-diene-8-beta,16-diol. The dioxygenase fc-dox then catalyzes the 16-oxydation of fusicocca-2,10(14)-diene-8-beta,16-diol to yield an aldehyde (8-beta-hydroxyfusicocca-1,10(14)-dien-16-al). The short-chain dehydrogenase/reductase fc-sdr catalyzes the reduction of the aldehyde to yield fusicocca-1,10(14)-diene-8-beta,16-diol. The next step is the hydroxylation at C-9 performed by the cytochrome P450 monooxygenase PaP450-3 that leads to fusicoccin H aglycon which is glycosylated to fusicoccin H by the O-glycosyltransferase PaGT. Hydroxylation at C-12 by the cytochrome P450 monooxygenase PaP450-4 leads then to the production of fusicoccin Q and is followed by methylation by the O-methyltransferase PaMT to yield fusicoccin P. Fusicoccin P is further converted to fusicoccin J via prenylation by the O-glucose prenyltransferase PaPT. Cytochrome P450 monooxygenase PaP450-5 then performs hydroxylation at C-19 to yield dideacetyl-fusicoccin A which is acetylated to 3'-O-deacetyl-fusicoccin A by the O-acetyltransferase PaAT-2. Finally, a another acetylation by the O-acetyltransferase PaAT-1 yields fusicoccin A. This chain is O-acetyltransferase PaAT-1, found in Phomopsis amygdali (Fusicoccum amygdali).